A 40-amino-acid chain; its full sequence is Natriuretic peptide HsNP-b (40 aa).

The propeptide occupies 1–8 (SGSKTAKI). The segment at 1–40 (SGSKTAKIGDGCFGVPIDHIGSTTDLGCGRPRPKPTPRGS) is disordered. The cysteines at positions 12 and 28 are disulfide-linked. Residues 31 to 40 (PRPKPTPRGS) show a composition bias toward basic residues.

This sequence belongs to the natriuretic peptide family. Expressed by the venom gland.

It is found in the secreted. In terms of biological role, snake venom natriuretic peptide that targets both NPR1 and NPR2. Exhibits hypotensive and vasodepressor activities. The chain is Natriuretic peptide HsNP-b from Hoplocephalus stephensii (Stephens's banded snake).